Consider the following 447-residue polypeptide: FAD-dependent monooxygenase tropB (447 aa).

The chain crosses the membrane as a helical span at residues 12–32 (PLSVGIVGGGIIGVILAAGLV). 3 residues coordinate FAD: Glu42, Ala55, and Arg124. The N-linked (GlcNAc...) asparagine glycan is linked to Asn153. Residues Arg206 and Tyr239 contribute to the active site. Asn243 carries an N-linked (GlcNAc...) asparagine glycan. The FAD site is built by Asp322 and Ala335.

It belongs to the paxM FAD-dependent monooxygenase family. FAD serves as cofactor.

The protein resides in the membrane. Its pathway is secondary metabolite biosynthesis. FAD-dependent monooxygenase; part of the gene cluster that mediates the biosynthesis of the tropolone class of fungal maleic anhydrides. Within the pathway, tropB catalyzes a synthetically challenging asymmetric oxidative dearomatization reaction to convert 3-methylorcinaldehyde into a hydroxycyclohexadione. The pathway begins with the synthesis of 3-methylorcinaldehyde by the non-reducing polyketide synthase (PKS) tropA. 3-methylorcinaldehyde is the substrate for the FAD-dependent monooxygenase tropB to yield a dearomatized hydroxycyclohexadione. The 2-oxoglutarate-dependent dioxygenase tropC then performs the oxidative ring expansion to provide the first tropolone metabolite stipitaldehyde. Trop D converts stipitaldehyde into stipitacetal which is in turn converted to stipitalide by the short-chain dehydrogenase/reductase tropE. The next steps involve tropF, tropG, tropH, tropI and tropJ to form successive tropolone maleic anhydrides including stipitaldehydic, stipitatonic and stipitatic acids. The chain is FAD-dependent monooxygenase tropB from Talaromyces stipitatus (strain ATCC 10500 / CBS 375.48 / QM 6759 / NRRL 1006) (Penicillium stipitatum).